A 283-amino-acid polypeptide reads, in one-letter code: 2-hydroxymuconate semialdehyde hydrolase (283 aa).

One can recognise an AB hydrolase-1 domain in the interval 32–262 (LMMIHGSGPG…QCGHWTQIEH (231 aa)). Active-site residues include serine 107, aspartate 228, and histidine 256.

The protein belongs to the DmpD/TodF/XylF esterase family.

It catalyses the reaction (2Z,4E)-2-hydroxy-6-oxohexa-2,4-dienoate + H2O = 2-oxopent-4-enoate + formate + H(+). Its pathway is aromatic compound metabolism; benzoate degradation via hydroxylation. Its function is as follows. Catalyzes the conversion of 2-hydroxymuconate semialdehyde to 2-hydroxypent-2,4-dienoate. This Pseudomonas sp. (strain CF600) protein is 2-hydroxymuconate semialdehyde hydrolase (dmpD).